A 148-amino-acid polypeptide reads, in one-letter code: uncharacterized protein (148 aa).

It to A.tumefaciens Atu0565/AGR_C_992.

This is an uncharacterized protein from Rhizobium meliloti (strain 1021) (Ensifer meliloti).